The sequence spans 116 residues: Non-specific lipid-transfer protein (116 aa).

The signal sequence occupies residues methionine 1 to serine 23. 4 disulfide bridges follow: cysteine 27–cysteine 74, cysteine 37–cysteine 51, cysteine 52–cysteine 97, and cysteine 72–cysteine 111.

It belongs to the plant LTP family.

Its function is as follows. Plant non-specific lipid-transfer proteins transfer phospholipids as well as galactolipids across membranes. May play a role in wax or cutin deposition in the cell walls of expanding epidermal cells and certain secretory tissues. The sequence is that of Non-specific lipid-transfer protein from Cicer arietinum (Chickpea).